The chain runs to 202 residues: LexA repressor (202 aa).

A DNA-binding region (H-T-H motif) is located at residues 28–48 (RAEIAQRLGFRSPNAAEEHLK). Active-site for autocatalytic cleavage activity residues include Ser119 and Lys156.

The protein belongs to the peptidase S24 family. As to quaternary structure, homodimer.

The catalysed reaction is Hydrolysis of Ala-|-Gly bond in repressor LexA.. Its function is as follows. Represses a number of genes involved in the response to DNA damage (SOS response), including recA and lexA. Binds to the 16 bp palindromic sequence 5'-CTGTATATATATACAG-3'. In the presence of single-stranded DNA, RecA interacts with LexA causing an autocatalytic cleavage which disrupts the DNA-binding part of LexA, leading to derepression of the SOS regulon and eventually DNA repair. The chain is LexA repressor from Salmonella agona (strain SL483).